Here is a 74-residue protein sequence, read N- to C-terminus: Small ribosomal subunit protein bS18 (74 aa).

It belongs to the bacterial ribosomal protein bS18 family. Part of the 30S ribosomal subunit. Forms a tight heterodimer with protein bS6.

Its function is as follows. Binds as a heterodimer with protein bS6 to the central domain of the 16S rRNA, where it helps stabilize the platform of the 30S subunit. The protein is Small ribosomal subunit protein bS18 of Alkalilimnicola ehrlichii (strain ATCC BAA-1101 / DSM 17681 / MLHE-1).